Consider the following 329-residue polypeptide: MVHAKSWTLKKHFVGYPTNSDFELKTVELPPLKDGEVLLEALYLTVDPYMRIMAKSLKEGDMMMGEQVARVVESKNSAFPTGTIVLAPSGWTTHSISNGEKLEKVLAEWPDTLPLSLALGTVGMPGLTAYFGLLDICGVKGGETVLVSAAAGAVGSIVGQIAKLKGCKVVGTAGSDEKVAWLKKHGFDVALNYKTVKSLEEALKEAAPEGYDCYFDNVGGEFSNVAITQMKKFGRIAICGAISVYNRTSPLSPGPSPEIIIFKELHLQGFVVYRWQGEVRQKALRDLLKWVSEGKIQYHEHVTEGFENMPAAFIGLLKGENLGKAIVKA.

T18 carries the post-translational modification Phosphothreonine. A Phosphoserine modification is found at S20. Residues 152–155 (GAVG), K178, Y193, N217, 239–245 (CGAISVY), 270–272 (FVV), and N321 contribute to the NADP(+) site. Position 178 is an N6-(2-hydroxyisobutyryl)lysine; alternate (K178). Residue K178 is modified to N6-acetyllysine; alternate.

The protein belongs to the NADP-dependent oxidoreductase L4BD family. As to quaternary structure, monomer or homodimer.

The protein localises to the cytoplasm. It carries out the reaction 13,14-dihydro-15-oxo-prostaglandin E1 + NADP(+) = 15-oxoprostaglandin E1 + NADPH + H(+). It catalyses the reaction 13,14-dihydro-15-oxo-prostaglandin E2 + NADP(+) = 15-oxoprostaglandin E2 + NADPH + H(+). The catalysed reaction is 13,14-dihydro-15-oxo-prostaglandin F1alpha + NADP(+) = 15-oxoprostaglandin F1alpha + NADPH + H(+). The enzyme catalyses 13,14-dihydro-15-oxo-PGF2alpha + NADP(+) = 15-oxoprostaglandin F2alpha + NADPH + H(+). It carries out the reaction leukotriene B4 + NADP(+) = 12-oxo-leukotriene B4 + NADPH + H(+). It catalyses the reaction 20-hydroxy-leukotriene B4 + NADP(+) = 12-oxo-20-hydroxy-leukotriene B4 + NADPH + H(+). The catalysed reaction is 6-trans-leukotriene B4 + NADP(+) = 12-oxo-(5S)-hydroxy-(6E,8E,10E,14Z)-eicosatetraenoate + NADPH + H(+). The enzyme catalyses (5S,12S)-dihydroxy-(6E,10E,12E,14Z)-eicosatetraenoate + NADP(+) = 12-oxo-(5S)-hydroxy-(6E,8E,10E,14Z)-eicosatetraenoate + NADPH + H(+). It carries out the reaction an n-alkanal + NADP(+) = an alk-2-enal + NADPH + H(+). It catalyses the reaction hexanal + NADP(+) = (E)-hex-2-enal + NADPH + H(+). The catalysed reaction is octanal + NADP(+) = (2E)-octenal + NADPH + H(+). The enzyme catalyses decanal + NADP(+) = (2E)-decenal + NADPH + H(+). It carries out the reaction dodecanal + NADP(+) = (2E)-dodecenal + NADPH + H(+). It catalyses the reaction 4-hydroxynonanal + NADP(+) = (E)-4-hydroxynon-2-enal + NADPH + H(+). The catalysed reaction is pentan-2-one + NADP(+) = (E)-pent-3-en-2-one + NADPH + H(+). The enzyme catalyses nonan-2-one + NADP(+) = (3E)-nonen-2-one + NADPH + H(+). NAD(P)H-dependent oxidoreductase involved in metabolic inactivation of pro- and anti-inflammatory eicosanoids: prostaglandins (PG), leukotrienes (LT) and lipoxins (LX). Catalyzes with high efficiency the reduction of the 13,14 double bond of 15-oxoPGs, including 15-oxo-PGE1, 15-oxo-PGE2, 15-oxo-PGF1-alpha and 15-oxo-PGF2-alpha. Catalyzes with lower efficiency the oxidation of the hydroxyl group at C12 of LTB4 and its derivatives, converting them into biologically less active 12-oxo-LTB4 metabolites. Reduces 15-oxo-LXA4 to 13,14 dihydro-15-oxo-LXA4, enhancing neutrophil recruitment at the inflammatory site. Plays a role in metabolic detoxification of alkenals and ketones. Reduces alpha,beta-unsaturated alkenals and ketones, particularly those with medium-chain length, showing highest affinity toward (2E)-decenal and (3E)-3-nonen-2-one. May inactivate 4-hydroxy-2-nonenal, a cytotoxic lipid constituent of oxidized low-density lipoprotein particles. The protein is Prostaglandin reductase 1 (PTGR1) of Bos taurus (Bovine).